The chain runs to 140 residues: Nucleoside diphosphate kinase (140 aa).

ATP contacts are provided by K11, F59, R87, T93, R104, and N114. H117 acts as the Pros-phosphohistidine intermediate in catalysis.

Belongs to the NDK family. In terms of assembly, homotetramer. Mg(2+) is required as a cofactor.

Its subcellular location is the cytoplasm. The catalysed reaction is a 2'-deoxyribonucleoside 5'-diphosphate + ATP = a 2'-deoxyribonucleoside 5'-triphosphate + ADP. The enzyme catalyses a ribonucleoside 5'-diphosphate + ATP = a ribonucleoside 5'-triphosphate + ADP. Major role in the synthesis of nucleoside triphosphates other than ATP. The ATP gamma phosphate is transferred to the NDP beta phosphate via a ping-pong mechanism, using a phosphorylated active-site intermediate. This chain is Nucleoside diphosphate kinase, found in Beijerinckia indica subsp. indica (strain ATCC 9039 / DSM 1715 / NCIMB 8712).